We begin with the raw amino-acid sequence, 388 residues long: Succinate--CoA ligase [ADP-forming] subunit beta (388 aa).

The ATP-grasp domain occupies 9–244 (KEIFRSMGVA…LEEEDPKEIE (236 aa)). Residues Lys46, 53–55 (GRG), Glu99, Cys102, and Glu107 contribute to the ATP site. Mg(2+)-binding residues include Asn199 and Asp213. Residues Asn264 and 321-323 (GIM) each bind substrate.

This sequence belongs to the succinate/malate CoA ligase beta subunit family. As to quaternary structure, heterotetramer of two alpha and two beta subunits. Mg(2+) serves as cofactor.

The catalysed reaction is succinate + ATP + CoA = succinyl-CoA + ADP + phosphate. The enzyme catalyses GTP + succinate + CoA = succinyl-CoA + GDP + phosphate. Its pathway is carbohydrate metabolism; tricarboxylic acid cycle; succinate from succinyl-CoA (ligase route): step 1/1. Its function is as follows. Succinyl-CoA synthetase functions in the citric acid cycle (TCA), coupling the hydrolysis of succinyl-CoA to the synthesis of either ATP or GTP and thus represents the only step of substrate-level phosphorylation in the TCA. The beta subunit provides nucleotide specificity of the enzyme and binds the substrate succinate, while the binding sites for coenzyme A and phosphate are found in the alpha subunit. The chain is Succinate--CoA ligase [ADP-forming] subunit beta from Staphylococcus aureus (strain MRSA252).